The primary structure comprises 115 residues: Protein translation factor SUI1 homolog (115 aa).

The protein belongs to the SUI1 family.

Probably involved in translation. The chain is Protein translation factor SUI1 homolog (TIF) from Zea mays (Maize).